Reading from the N-terminus, the 407-residue chain is MKRAYIMVLDSFGIGSSADAERFGDAGSDTLGHIAQACAAGTADKGRSGPLHLPNLSRLGLGKAAEASTGTFPAGLDENADIIGAYAHASEISSGKDTPSGHWEIAGVPVLFDWGYFKDEENSFPQDLLDKLVKRANLPGYLGNCHSSGTVILDQLAEEHMKTGKPIFYTSADSVFQIACHEETFGLDKLYELCEIAREELTEGGYNIGRVIARPFIGDKPGHFERTGNRHDLAVEPPAPTILKKMVDEKGGEVVSVGKIADIYAQVGITKKVKATGIDALFDATLKEMDSAGDNTIVFTNFVDFDSAYGHRRDIPGYAAALELFDRRLPEMLSRVKGDDILILTADHGCDPSWHGTDHTRENVPVLIYGPNVKPGSYGHRETFADIGQTVAAYFGLSPMDYGKSIL.

Residues Asp-10, Asp-306, His-311, Asp-347, His-348, and His-359 each coordinate Mn(2+).

It belongs to the phosphopentomutase family. Mn(2+) is required as a cofactor.

The protein resides in the cytoplasm. The enzyme catalyses 2-deoxy-alpha-D-ribose 1-phosphate = 2-deoxy-D-ribose 5-phosphate. The catalysed reaction is alpha-D-ribose 1-phosphate = D-ribose 5-phosphate. It participates in carbohydrate degradation; 2-deoxy-D-ribose 1-phosphate degradation; D-glyceraldehyde 3-phosphate and acetaldehyde from 2-deoxy-alpha-D-ribose 1-phosphate: step 1/2. Functionally, isomerase that catalyzes the conversion of deoxy-ribose 1-phosphate (dRib-1-P) and ribose 1-phosphate (Rib-1-P) to deoxy-ribose 5-phosphate (dRib-5-P) and ribose 5-phosphate (Rib-5-P), respectively. This chain is Phosphopentomutase, found in Pectobacterium carotovorum subsp. carotovorum (strain PC1).